Here is a 270-residue protein sequence, read N- to C-terminus: 5'-nucleotidase SurE (270 aa).

4 residues coordinate a divalent metal cation: D8, D9, S40, and N98.

This sequence belongs to the SurE nucleotidase family. A divalent metal cation serves as cofactor.

It is found in the cytoplasm. The catalysed reaction is a ribonucleoside 5'-phosphate + H2O = a ribonucleoside + phosphate. Its function is as follows. Nucleotidase that shows phosphatase activity on nucleoside 5'-monophosphates. The chain is 5'-nucleotidase SurE from Cyanothece sp. (strain PCC 7425 / ATCC 29141).